The primary structure comprises 270 residues: Formamidopyrimidine-DNA glycosylase (270 aa).

The active-site Schiff-base intermediate with DNA is the Pro2. The active-site Proton donor is the Glu3. Residue Lys59 is the Proton donor; for beta-elimination activity of the active site. The DNA site is built by His91, Arg110, and Lys151. An FPG-type zinc finger spans residues 236 to 270 (RVYGRDKEPCVTCGQQVKSKVLGGRNTFWCSRCQK). Residue Arg260 is the Proton donor; for delta-elimination activity of the active site.

It belongs to the FPG family. Monomer. Zn(2+) serves as cofactor.

It carries out the reaction Hydrolysis of DNA containing ring-opened 7-methylguanine residues, releasing 2,6-diamino-4-hydroxy-5-(N-methyl)formamidopyrimidine.. It catalyses the reaction 2'-deoxyribonucleotide-(2'-deoxyribose 5'-phosphate)-2'-deoxyribonucleotide-DNA = a 3'-end 2'-deoxyribonucleotide-(2,3-dehydro-2,3-deoxyribose 5'-phosphate)-DNA + a 5'-end 5'-phospho-2'-deoxyribonucleoside-DNA + H(+). Involved in base excision repair of DNA damaged by oxidation or by mutagenic agents. Acts as a DNA glycosylase that recognizes and removes damaged bases. Has a preference for oxidized purines, such as 7,8-dihydro-8-oxoguanine (8-oxoG). Has AP (apurinic/apyrimidinic) lyase activity and introduces nicks in the DNA strand. Cleaves the DNA backbone by beta-delta elimination to generate a single-strand break at the site of the removed base with both 3'- and 5'-phosphates. The protein is Formamidopyrimidine-DNA glycosylase of Bdellovibrio bacteriovorus (strain ATCC 15356 / DSM 50701 / NCIMB 9529 / HD100).